Reading from the N-terminus, the 302-residue chain is Protein NEOXANTHIN-DEFICIENT 1 (302 aa).

Functionally, required for neoxanthin biosynthesis. Probably not involved directly in the enzymatic conversion of violaxanthin to neoxanthin. Is necessary but not sufficient for neoxanthin synthesis. In Oryza sativa subsp. japonica (Rice), this protein is Protein NEOXANTHIN-DEFICIENT 1.